The following is an 88-amino-acid chain: Small ribosomal subunit protein uS15 (88 aa).

Belongs to the universal ribosomal protein uS15 family. As to quaternary structure, part of the 30S ribosomal subunit. Forms a bridge to the 50S subunit in the 70S ribosome, contacting the 23S rRNA.

In terms of biological role, one of the primary rRNA binding proteins, it binds directly to 16S rRNA where it helps nucleate assembly of the platform of the 30S subunit by binding and bridging several RNA helices of the 16S rRNA. Its function is as follows. Forms an intersubunit bridge (bridge B4) with the 23S rRNA of the 50S subunit in the ribosome. The polypeptide is Small ribosomal subunit protein uS15 (Paracidovorax citrulli (strain AAC00-1) (Acidovorax citrulli)).